The following is a 178-amino-acid chain: Sec-independent protein translocase protein TatB (178 aa).

A helical membrane pass occupies residues 1 to 21; it reads MFDIGWSELLVIGVVALIAIG. The tract at residues 146-178 is disordered; the sequence is LAIVREIKPEPQPQPADGAAPAEPERLKDAKAS. Positions 168-178 are enriched in basic and acidic residues; it reads EPERLKDAKAS.

It belongs to the TatB family. As to quaternary structure, the Tat system comprises two distinct complexes: a TatABC complex, containing multiple copies of TatA, TatB and TatC subunits, and a separate TatA complex, containing only TatA subunits. Substrates initially bind to the TatABC complex, which probably triggers association of the separate TatA complex to form the active translocon.

The protein localises to the cell inner membrane. Its function is as follows. Part of the twin-arginine translocation (Tat) system that transports large folded proteins containing a characteristic twin-arginine motif in their signal peptide across membranes. Together with TatC, TatB is part of a receptor directly interacting with Tat signal peptides. TatB may form an oligomeric binding site that transiently accommodates folded Tat precursor proteins before their translocation. The polypeptide is Sec-independent protein translocase protein TatB (Bradyrhizobium sp. (strain ORS 278)).